A 199-amino-acid chain; its full sequence is Imidazoleglycerol-phosphate dehydratase (199 aa).

This sequence belongs to the imidazoleglycerol-phosphate dehydratase family.

The protein resides in the cytoplasm. It carries out the reaction D-erythro-1-(imidazol-4-yl)glycerol 3-phosphate = 3-(imidazol-4-yl)-2-oxopropyl phosphate + H2O. It functions in the pathway amino-acid biosynthesis; L-histidine biosynthesis; L-histidine from 5-phospho-alpha-D-ribose 1-diphosphate: step 6/9. This Desulfotalea psychrophila (strain LSv54 / DSM 12343) protein is Imidazoleglycerol-phosphate dehydratase.